Here is a 149-residue protein sequence, read N- to C-terminus: Transthyretin (149 aa).

The first 20 residues, 1–20 (MAFHSLLLLCLAGLLFVSEA), serve as a signal peptide directing secretion. At C32 the chain carries Sulfocysteine. K37 provides a ligand contact to L-thyroxine. E64 carries the post-translational modification 4-carboxyglutamate. E76 and S139 together coordinate L-thyroxine.

Belongs to the transthyretin family. As to quaternary structure, homotetramer. Dimer of dimers. In the homotetramer, subunits assemble around a central channel that can accommodate two ligand molecules. Interacts with RBP4. In terms of processing, sulfonation of the reactive cysteine Cys-32 enhances the stability of the native conformation of TTR, avoiding misassembly of the protein leading to amyloid formation. Detected in plasma (at protein level). Detected in liver.

The protein resides in the secreted. Its function is as follows. Thyroid hormone-binding protein. Probably transports thyroxine from the bloodstream to the brain. This Petaurus breviceps (Australian sugar glider) protein is Transthyretin (TTR).